The following is a 309-amino-acid chain: Ornithine carbamoyltransferase (309 aa).

Carbamoyl phosphate is bound by residues Ser-57–Thr-60, Gln-84, Arg-108, and His-135–Gln-138. Residues Asn-166, Asp-224, and Ser-228–Met-229 contribute to the L-ornithine site. Carbamoyl phosphate-binding positions include Cys-264–Leu-265 and Arg-292.

It belongs to the aspartate/ornithine carbamoyltransferase superfamily. OTCase family.

The protein resides in the cytoplasm. It carries out the reaction carbamoyl phosphate + L-ornithine = L-citrulline + phosphate + H(+). It participates in amino-acid biosynthesis; L-arginine biosynthesis; L-arginine from L-ornithine and carbamoyl phosphate: step 1/3. Reversibly catalyzes the transfer of the carbamoyl group from carbamoyl phosphate (CP) to the N(epsilon) atom of ornithine (ORN) to produce L-citrulline. This Paracidovorax citrulli (strain AAC00-1) (Acidovorax citrulli) protein is Ornithine carbamoyltransferase.